Reading from the N-terminus, the 116-residue chain is RNA guanine-N7 methyltransferase activating subunit (116 aa).

Residues M1–R55 form an interaction with RNMT region. Residues K31–Y116 are disordered. Residues Q36–D42 carry the RNMT-activating domain motif. The interval D56–Y116 is RNA-binding. Residues Q67–Y78 show a composition bias toward low complexity. Residues Y97–R110 are compositionally biased toward polar residues.

It belongs to the RAM family.

The protein resides in the nucleus. Regulatory subunit of the mRNA-capping methyltransferase RNMT:RAMAC complex that methylates the N7 position of the added guanosine to the 5'-cap structure of mRNAs. Promotes the recruitment of the methyl donor, S-adenosyl-L-methionine, to RNMT. Regulates RNMT expression by a post-transcriptional stabilizing mechanism. Binds RNA. This is RNA guanine-N7 methyltransferase activating subunit (ramac) from Xenopus tropicalis (Western clawed frog).